We begin with the raw amino-acid sequence, 130 residues long: Small ribosomal subunit protein uS8 (130 aa).

Belongs to the universal ribosomal protein uS8 family. As to quaternary structure, part of the 30S ribosomal subunit.

In terms of biological role, one of the primary rRNA binding proteins, it binds directly to 16S rRNA central domain where it helps coordinate assembly of the platform of the 30S subunit. This Pyrobaculum calidifontis (strain DSM 21063 / JCM 11548 / VA1) protein is Small ribosomal subunit protein uS8.